The sequence spans 319 residues: Cytochrome f (319 aa).

Positions 1 to 35 (MQNRNISYWIKKCVIQSISIVILMKIIAWPSISEA) are cleaved as a signal peptide. Residues Y36, C56, C59, and H60 each coordinate heme. A helical membrane pass occupies residues 285 to 305 (VQSLLVFFVSVTLAQIFLVLK).

This sequence belongs to the cytochrome f family. The 4 large subunits of the cytochrome b6-f complex are cytochrome b6, subunit IV (17 kDa polypeptide, petD), cytochrome f and the Rieske protein, while the 4 small subunits are PetG, PetL, PetM and PetN. The complex functions as a dimer. Heme serves as cofactor.

The protein resides in the plastid. Its subcellular location is the chloroplast thylakoid membrane. Functionally, component of the cytochrome b6-f complex, which mediates electron transfer between photosystem II (PSII) and photosystem I (PSI), cyclic electron flow around PSI, and state transitions. The protein is Cytochrome f of Physcomitrium patens (Spreading-leaved earth moss).